The chain runs to 595 residues: Estrogen receptor (595 aa).

Residues 1 to 184 (MTMTLHTKAS…AMESAKETRY (184 aa)) form a modulating (transactivation AF-1); mediates interaction with MACROD1 region. The O-linked (GlcNAc) serine glycan is linked to S10. The required for interaction with NCOA1 stretch occupies residues 35-47 (LERPLGEVYVDSS). An interaction with DDX5; self-association region spans residues 35–174 (LERPLGEVYV…LASTSDKGSM (140 aa)). A phosphoserine; by CDK2 mark is found at S104 and S106. S118 carries the phosphoserine modification. Positions 144 to 174 (AGPPAFYRPNSDNRRQGGRERLASTSDKGSM) are disordered. The segment covering 154 to 165 (SDNRRQGGRERL) has biased composition (basic and acidic residues). Residue S167 is modified to Phosphoserine; by CK2. NR C4-type zinc fingers lie at residues 185–205 (CAVCNDYASGYHYGVWSCEGC) and 221–245 (CPATNQCTIDKNRRKSCQACRLRKC). Positions 185–250 (CAVCNDYASG…RLRKCYEVGM (66 aa)) form a DNA-binding region, nuclear receptor. The tract at residues 185-310 (CAVCNDYASG…TKKNSPVLSL (126 aa)) is mediates interaction with DNTTIP2. The hinge stretch occupies residues 251 to 310 (MKGGIRKDRRGGRMLKHKRQRDDGEGRNEAVPPGDMRSANLWPSPLLIKHTKKNSPVLSL). Residues 257 to 269 (KDRRGGRMLKHKR) are compositionally biased toward basic residues. Residues 257–288 (KDRRGGRMLKHKRQRDDGEGRNEAVPPGDMRS) form a disordered region. R260 bears the Asymmetric dimethylarginine; by PRMT1 mark. An interaction with AKAP13 region spans residues 262–595 (GRMLKHKRQR…GEAENFPTTI (334 aa)). Residues 264 to 594 (MLKHKRQRDD…TGEAENFPTT (331 aa)) are self-association. Residues 311 to 547 (TADQMISALL…DLLLEMLDAH (237 aa)) enclose the NR LBD domain. The transactivation AF-2 stretch occupies residues 311 to 594 (TADQMISALL…TGEAENFPTT (284 aa)). E353 and R394 together coordinate 17beta-estradiol. C447 is lipidated: S-palmitoyl cysteine. H524 contacts 17beta-estradiol. Y537 is subject to Phosphotyrosine; by Tyr-kinases. The tract at residues 551–575 (APTNLGGPPPEDMSQSQLATSGSTP) is disordered. The span at 563–575 (MSQSQLATSGSTP) shows a compositional bias: polar residues.

Belongs to the nuclear hormone receptor family. NR3 subfamily. In terms of assembly, binds DNA as a homodimer. Can form a heterodimer with ESR2. Interacts with coactivator NCOA5. Interacts with PELP1, the interaction is enhanced by 17-beta-estradiol; the interaction increases ESR1 transcriptional activity. Interacts with NCOA7; the interaction is ligand-inducible. Interacts with AKAP13, CUEDC2, HEXIM1, KDM5A, MAP1S, SMARD1, and UBE1C. Interacts with MUC1; the interaction is stimulated by 7 beta-estradiol (E2) and enhances ESR1-mediated transcription. Interacts with DNTTIP2, and UIMC1. Interacts with KMT2D/MLL2. Interacts with ATAD2; the interaction is enhanced by estradiol. Interacts with KIF18A and LDB1. Interacts with RLIM (via its C-terminus). Interacts with MACROD1. Interacts with SH2D4A and PLCG. Interacts with SH2D4A; the interaction blocks binding to PLCG and inhibits estrogen-induced cell proliferation. Interacts with DYNLL1. Interacts with CCDC62; the interaction requires estradiol and appears to enhance the transcription of target genes. Interacts with NR2C1; the interaction prevents homodimerization of ESR1 and suppresses its transcriptional activity and cell growth. Interacts with DNAAF4. Interacts with PRMT2. Interacts with RBFOX2. Interacts with EP300; the interaction is estrogen-dependent and enhanced by CITED1. Interacts with CITED1; the interaction is estrogen-dependent. Interacts with FAM120B, FOXL2, PHB2 and SLC30A9. Interacts with coactivators NCOA3 and NCOA6. Interacts with STK3/MST2 only in the presence of SAV1 and vice-versa. Binds to CSNK1D. Interacts with NCOA2; NCOA2 can interact with ESR1 AF-1 and AF-2 domains simultaneously and mediate their transcriptional synergy. Interacts with DDX5. Interacts with NCOA1; the interaction seems to require a self-association of N-terminal and C-terminal regions. Interacts with ZNF366, DDX17, NFKB1, RELA, SP1 and SP3. Interacts with NRIP1. Interacts with GPER1; the interaction occurs in an estrogen-dependent manner. Interacts with CLOCK and the interaction is stimulated by estrogen. Interacts with TRIP4 (ufmylated); estrogen dependent. Interacts with LMTK3; the interaction phosphorylates ESR1 (in vitro) and protects it against proteasomal degradation. Interacts with CCAR2 (via N-terminus) in a ligand-independent manner. Interacts with ZFHX3. Interacts with SFR1 in a ligand-dependent and -independent manner. Interacts with DCAF13, LATS1 and DCAF1; regulates ESR1 ubiquitination and ubiquitin-mediated proteasomal degradation. Interacts (via DNA-binding domain) with POU4F2 (C-terminus); this interaction increases the estrogen receptor ESR1 transcriptional activity in a DNA- and ligand 17-beta-estradiol-independent manner. Interacts with ESRRB isoform 1. Interacts with UBE3A and WBP2. Interacts with GTF2B. Interacts with RBM39. In the absence of hormonal ligand, interacts with TACC1. Interacts with PI3KR1 or PI3KR2 and PTK2/FAK1. Interacts with SRC. Interacts with BAG1; the interaction is promoted in the absence of estradiol (17-beta-estradiol/E2). Interacts with and ubiquitinated by STUB1; the interaction is promoted in the absence of estradiol (17-beta-estradiol/E2). Interacts with NEDD8. Post-translationally, phosphorylated by cyclin A/CDK2 and CK1. Phosphorylation probably enhances transcriptional activity. Dephosphorylation at Ser-118 by PPP5C inhibits its transactivation activity. Phosphorylated by LMTK3 (in vitro). In terms of processing, ubiquitinated; regulated by LATS1 via DCAF1 it leads to ESR1 proteasomal degradation. Deubiquitinated by OTUB1. Ubiquitinated by STUB1/CHIP; in the CA1 hippocampal region following loss of endogenous circulating estradiol (17-beta-estradiol/E2). Ubiquitinated by UBR5, leading to its degradation: UBR5 specifically recognizes and binds ligand-bound ESR1 when it is not associated with coactivators (NCOAs). In presence of NCOAs, the UBR5-degron is not accessible, preventing its ubiquitination and degradation. Palmitoylated at Cys-447 by ZDHHC7 and ZDHHC21. Palmitoylation is required for plasma membrane targeting and for rapid intracellular signaling via ERK and AKT kinases and cAMP generation, but not for signaling mediated by the nuclear hormone receptor. Post-translationally, dimethylated by PRMT1 at Arg-260. The methylation may favor cytoplasmic localization. Demethylated by JMJD6 at Arg-260.

The protein resides in the nucleus. The protein localises to the cytoplasm. It localises to the golgi apparatus. It is found in the cell membrane. Functionally, nuclear hormone receptor. The steroid hormones and their receptors are involved in the regulation of eukaryotic gene expression and affect cellular proliferation and differentiation in target tissues. Ligand-dependent nuclear transactivation involves either direct homodimer binding to a palindromic estrogen response element (ERE) sequence or association with other DNA-binding transcription factors, such as AP-1/c-Jun, c-Fos, ATF-2, Sp1 and Sp3, to mediate ERE-independent signaling. Ligand binding induces a conformational change allowing subsequent or combinatorial association with multiprotein coactivator complexes through LXXLL motifs of their respective components. Mutual transrepression occurs between the estrogen receptor (ER) and NF-kappa-B in a cell-type specific manner. Decreases NF-kappa-B DNA-binding activity and inhibits NF-kappa-B-mediated transcription from the IL6 promoter and displace RELA/p65 and associated coregulators from the promoter. Recruited to the NF-kappa-B response element of the CCL2 and IL8 promoters and can displace CREBBP. Present with NF-kappa-B components RELA/p65 and NFKB1/p50 on ERE sequences. Can also act synergistically with NF-kappa-B to activate transcription involving respective recruitment adjacent response elements; the function involves CREBBP. Can activate the transcriptional activity of TFF1. Also mediates membrane-initiated estrogen signaling involving various kinase cascades. Essential for MTA1-mediated transcriptional regulation of BRCA1 and BCAS3. Maintains neuronal survival in response to ischemic reperfusion injury when in the presence of circulating estradiol (17-beta-estradiol/E2). This Sus scrofa (Pig) protein is Estrogen receptor (ESR1).